A 490-amino-acid polypeptide reads, in one-letter code: Betaine aldehyde dehydrogenase (490 aa).

Positions 27 and 93 each coordinate K(+). Gly150–Trp152 is a binding site for NAD(+). Lys162 functions as the Charge relay system in the catalytic mechanism. NAD(+) is bound at residue Lys176–Glu179. A K(+)-binding site is contributed by Val180. Gly230 to Thr233 provides a ligand contact to NAD(+). Position 246 (Leu246) interacts with K(+). Glu252 functions as the Proton acceptor in the catalytic mechanism. The NAD(+) site is built by Gly254, Cys286, and Glu387. The Nucleophile role is filled by Cys286. Cysteine sulfenic acid (-SOH) is present on Cys286. 2 residues coordinate K(+): Lys457 and Gly460. The Charge relay system role is filled by Glu464.

This sequence belongs to the aldehyde dehydrogenase family. In terms of assembly, dimer of dimers. It depends on K(+) as a cofactor.

The catalysed reaction is betaine aldehyde + NAD(+) + H2O = glycine betaine + NADH + 2 H(+). It functions in the pathway amine and polyamine biosynthesis; betaine biosynthesis via choline pathway; betaine from betaine aldehyde: step 1/1. Involved in the biosynthesis of the osmoprotectant glycine betaine. Catalyzes the irreversible oxidation of betaine aldehyde to the corresponding acid. The chain is Betaine aldehyde dehydrogenase from Pseudomonas putida (strain GB-1).